A 724-amino-acid chain; its full sequence is Methionine--tRNA ligase (724 aa).

The 'HIGH' region motif lies at 11 to 21; it reads PYANGPIHAGH. Zn(2+)-binding residues include C143, C146, C156, and C159. A 'KMSKS' region motif is present at residues 344-348; that stretch reads KFSTS. T347 contacts ATP. In terms of domain architecture, tRNA-binding spans 624–724; it reads EFSKIDLRIG…KEVKLGAKVR (101 aa).

The protein belongs to the class-I aminoacyl-tRNA synthetase family. MetG type 1 subfamily. Homodimer. Zn(2+) is required as a cofactor.

It is found in the cytoplasm. It carries out the reaction tRNA(Met) + L-methionine + ATP = L-methionyl-tRNA(Met) + AMP + diphosphate. Is required not only for elongation of protein synthesis but also for the initiation of all mRNA translation through initiator tRNA(fMet) aminoacylation. The protein is Methionine--tRNA ligase of Pyrococcus furiosus (strain ATCC 43587 / DSM 3638 / JCM 8422 / Vc1).